Consider the following 125-residue polypeptide: Fluoride-specific ion channel FluC (125 aa).

Transmembrane regions (helical) follow at residues phenylalanine 5–phenylalanine 25, phenylalanine 33–tryptophan 53, phenylalanine 69–glycine 89, and isoleucine 101–leucine 121. The Na(+) site is built by glycine 76 and threonine 79.

This sequence belongs to the fluoride channel Fluc/FEX (TC 1.A.43) family.

The protein resides in the cell inner membrane. It catalyses the reaction fluoride(in) = fluoride(out). Its activity is regulated as follows. Na(+) is not transported, but it plays an essential structural role and its presence is essential for fluoride channel function. Its function is as follows. Fluoride-specific ion channel. Important for reducing fluoride concentration in the cell, thus reducing its toxicity. In Desulforapulum autotrophicum (strain ATCC 43914 / DSM 3382 / VKM B-1955 / HRM2) (Desulfobacterium autotrophicum), this protein is Fluoride-specific ion channel FluC.